Here is a 500-residue protein sequence, read N- to C-terminus: Maturase K (500 aa).

This sequence belongs to the intron maturase 2 family. MatK subfamily.

The protein localises to the plastid. It is found in the chloroplast. Its function is as follows. Usually encoded in the trnK tRNA gene intron. Probably assists in splicing its own and other chloroplast group II introns. In Fragaria vesca (Woodland strawberry), this protein is Maturase K.